A 690-amino-acid chain; its full sequence is Calpain-9 (690 aa).

The disordered stretch occupies residues 1 to 24; sequence MPYLHRSLRPQPQPVPRDARTVHS. The Calpain catalytic domain occupies 42 to 337; that stretch reads LFEDADFPAS…FDKVEICNLT (296 aa). 3 residues coordinate Ca(2+): leucine 81, glycine 83, and aspartate 88. The active site involves cysteine 97. Glutamate 167 serves as a coordination point for Ca(2+). Active-site residues include histidine 254 and asparagine 278. Positions 284, 291, 312, 314, and 316 each coordinate Ca(2+). The domain III stretch occupies residues 338-521; that stretch reads PDALEDNTLH…PQEEETEEER (184 aa). The tract at residues 522–690 is domain IV; sequence QFRALFRRIA…NEFINLTMNI (169 aa). EF-hand domains follow at residues 534-552, 561-589, and 591-626; these read DMEV…VLQK, LSLL…FRVF, and DKLR…AGFQ. Positions 574, 576, 578, 580, 585, 604, 606, 608, 610, and 615 each coordinate Ca(2+).

The protein belongs to the peptidase C2 family. Predominantly expressed in stomach and small intestine, although low levels of expression in other organs.

Calcium-regulated non-lysosomal thiol-protease. The polypeptide is Calpain-9 (Capn9) (Rattus norvegicus (Rat)).